Consider the following 1048-residue polypeptide: Malignant fibrous histiocytoma-amplified sequence 1 homolog (1048 aa).

Alanine 2 is subject to N-acetylalanine. LRR repeat units lie at residues aspartate 60–alanine 81, serine 84–leucine 105, histidine 108–alanine 129, glutamate 132–leucine 153, histidine 155–leucine 176, histidine 178–leucine 199, alanine 201–leucine 222, alanine 224–alanine 246, serine 247–leucine 268, arginine 270–alanine 292, glycine 293–leucine 314, arginine 316–leucine 337, and glycine 339–leucine 360. The segment at aspartate 60–leucine 360 is required for interaction with PJA2. The segment at aspartate 60–arginine 645 is required for interaction with PPP2R2A. Positions glutamine 399–arginine 645 constitute a Roc domain. Residue lysine 597 is modified to N6-acetyllysine.

In terms of assembly, interacts with RAF1. Interacts with HSPD1. Interacts with PPP2CA; retains PPP2CA into the cytoplasm and excludes it from the nucleus. Interacts with PPP2R2A; the interaction is direct. Interacts with PJA2. In terms of processing, ubiquitinated. Ubiquitination by PJA2 does not lead MFHAS1 to proteasomal degradation but positively regulates its function in polarization of macrophages.

Its subcellular location is the cytoplasm. Its function is as follows. Probable GTP-binding protein. Functions in innate immunity and more specifically the inflammatory response as a regulator of the Toll-like receptor TLR2 and TLR4 signaling pathways. Negatively regulates the part of the TLR4 signaling pathway that leads to the activation of the transcription factor AP-1. By retaining the phosphatase complex PP2A into the cytoplasm, prevents the dephosphorylation of the AP-1 subunit JUN which is required for proper activation of the transcription factor. Both inhibits and activates the TLR2-dependent signaling pathway. Positively regulates the TLR2 signaling pathway to activate specifically the downstream p38 and JNK MAP kinases and promote the polarization of macrophages toward the pro-inflammatory M1 phenotype. It may also play a role in the regulation of inflammation induced by high glucose through the PKB/AKT signaling pathway. Also involved in erythrocyte differentiation through activation of the ERK1/ERK2 signaling pathway. The sequence is that of Malignant fibrous histiocytoma-amplified sequence 1 homolog from Mus musculus (Mouse).